A 671-amino-acid polypeptide reads, in one-letter code: uncharacterized protein (671 aa).

A helical membrane pass occupies residues 39-56 (ATVTVVILLLILLLGWGY).

The protein localises to the membrane. This is an uncharacterized protein from Treponema pallidum (strain Nichols).